The primary structure comprises 373 residues: MKFELKKTEGRARRGRLVFDRGVVETPAFMPVGTYGTVKGMTPEEVKDTGAQILLGNTFHLWLRPGQDIMRKHGDLHDFMNWHGPILTDSGGFQVFSLGHIRKIKEEGVHFRNPINGEKIFLSPEKSMEIQNDLGSDVVMIFDECTPYPATHDVAKKSMEMSLRWATRSRQRFDELENKNALFGIIQGGVYEDLRDVSLKGLLDIGFDGYAVGGLAVGEPKEDMHRILKHVCPQIPEDKPRYLMGVGKPEDLVEGVRRGIDMFDCVMPTRNARNGHLFTTDGVVKIRNAKYKDDVTSLDAECDCYTCKNYTKSYLHHLDRCNEMLGARLNTIHNLRYYQRLMQGLRDAIDAGTLDDFVADFYQRQDKPVPSLD.

The active-site Proton acceptor is Asp-89. Substrate contacts are provided by residues 89–93 (DSGGF), Asp-143, Gln-187, and Gly-214. Residues 245-251 (GVGKPED) are RNA binding. Catalysis depends on Asp-264, which acts as the Nucleophile. The RNA binding; important for wobble base 34 recognition stretch occupies residues 269-273 (TRNAR). Zn(2+) is bound by residues Cys-302, Cys-304, Cys-307, and His-333.

Belongs to the queuine tRNA-ribosyltransferase family. In terms of assembly, homodimer. Within each dimer, one monomer is responsible for RNA recognition and catalysis, while the other monomer binds to the replacement base PreQ1. Requires Zn(2+) as cofactor.

The catalysed reaction is 7-aminomethyl-7-carbaguanine + guanosine(34) in tRNA = 7-aminomethyl-7-carbaguanosine(34) in tRNA + guanine. Its pathway is tRNA modification; tRNA-queuosine biosynthesis. In terms of biological role, catalyzes the base-exchange of a guanine (G) residue with the queuine precursor 7-aminomethyl-7-deazaguanine (PreQ1) at position 34 (anticodon wobble position) in tRNAs with GU(N) anticodons (tRNA-Asp, -Asn, -His and -Tyr). Catalysis occurs through a double-displacement mechanism. The nucleophile active site attacks the C1' of nucleotide 34 to detach the guanine base from the RNA, forming a covalent enzyme-RNA intermediate. The proton acceptor active site deprotonates the incoming PreQ1, allowing a nucleophilic attack on the C1' of the ribose to form the product. After dissociation, two additional enzymatic reactions on the tRNA convert PreQ1 to queuine (Q), resulting in the hypermodified nucleoside queuosine (7-(((4,5-cis-dihydroxy-2-cyclopenten-1-yl)amino)methyl)-7-deazaguanosine). The chain is Queuine tRNA-ribosyltransferase from Tolumonas auensis (strain DSM 9187 / NBRC 110442 / TA 4).